The sequence spans 330 residues: ADP-L-glycero-D-manno-heptose-6-epimerase (330 aa).

Residues 11–12, 32–33, Lys-39, Lys-54, 75–79, and Asn-92 each bind NADP(+); these read FI, DN, and EGACS. Tyr-139 (proton acceptor) is an active-site residue. Lys-143 provides a ligand contact to NADP(+). Asn-168 lines the substrate pocket. Positions 169 and 177 each coordinate NADP(+). The active-site Proton acceptor is Lys-177. Residues Arg-179, His-186, 200–203, Arg-213, and Tyr-292 contribute to the substrate site; that span reads FGEY.

The protein belongs to the NAD(P)-dependent epimerase/dehydratase family. HldD subfamily. In terms of assembly, homopentamer. Requires NADP(+) as cofactor.

The catalysed reaction is ADP-D-glycero-beta-D-manno-heptose = ADP-L-glycero-beta-D-manno-heptose. It participates in nucleotide-sugar biosynthesis; ADP-L-glycero-beta-D-manno-heptose biosynthesis; ADP-L-glycero-beta-D-manno-heptose from D-glycero-beta-D-manno-heptose 7-phosphate: step 4/4. Its function is as follows. Catalyzes the interconversion between ADP-D-glycero-beta-D-manno-heptose and ADP-L-glycero-beta-D-manno-heptose via an epimerization at carbon 6 of the heptose. This chain is ADP-L-glycero-D-manno-heptose-6-epimerase, found in Burkholderia pseudomallei (strain 1026b).